The chain runs to 462 residues: NEDD8-activating enzyme E1 catalytic subunit (462 aa).

A2 is modified (N-acetylalanine). The interval 53 to 70 (HPDFEPSTESLQFLLDTC) is interaction with UBE2M N-terminus. Residues 100–124 (DMDT…GRPK) and 148–171 (IQDF…SIIA) each bind ATP. Interaction with UBE2M N-terminus regions lie at residues 157-161 (RQFHI) and 192-217 (PSSI…LPGM). The segment at 227–229 (LYP) is interaction with NEDD8. Residue C237 is the Glycyl thioester intermediate of the active site. Interaction with NAE1 stretches follow at residues 242–248 (MPRLPEH) and 292–295 (YNIR). The interaction with UBE2M N-terminus stretch occupies residues 331–338 (IATSAYIP). The tract at residues 352 to 357 (YTYTFE) is interaction with NEDD8. The interaction with UBE2M core domain stretch occupies residues 368–462 (SQLPQNIQFS…QTVLFKLHFT (95 aa)).

This sequence belongs to the ubiquitin-activating E1 family. UBA3 subfamily. In terms of assembly, heterodimer of UBA3 and NAE1. Interacts with NEDD8, UBE2F and UBE2M. Binds ESR1 and ESR2 with bound steroid ligand. Interacts with TBATA.

The enzyme catalyses ATP + [NEDD8 protein] + [E1 NEDD8-activating enzyme]-L-cysteine = AMP + diphosphate + [E1 NEDD8-activating enzyme]-S-[NEDD8 protein]-yl-L-cysteine.. Its pathway is protein modification; protein neddylation. With respect to regulation, binding of TP53BP2 to the regulatory subunit NAE1 decreases activity. Its function is as follows. Catalytic subunit of the dimeric UBA3-NAE1 E1 enzyme. E1 activates NEDD8 by first adenylating its C-terminal glycine residue with ATP, thereafter linking this residue to the side chain of the catalytic cysteine, yielding a NEDD8-UBA3 thioester and free AMP. E1 finally transfers NEDD8 to the catalytic cysteine of UBE2M. Down-regulates steroid receptor activity. Necessary for cell cycle progression. This is NEDD8-activating enzyme E1 catalytic subunit (Uba3) from Mus musculus (Mouse).